We begin with the raw amino-acid sequence, 462 residues long: Bifunctional dihydrofolate reductase-thymidylate synthase (462 aa).

The DHFR domain maps to 6 to 165 (TFSMVLAMTL…INYDYQHLIN (160 aa)). Valine 10 is a substrate binding site. Residues alanine 12 and 18 to 24 (GIGYQNR) each bind NADP(+). Aspartate 32 serves as a coordination point for substrate. NADP(+)-binding positions include 49 to 51 (RKT) and 68 to 71 (ISKN). Substrate is bound at residue isoleucine 101. NADP(+) is bound at residue 102–109 (GGKRIFEE). Residue threonine 122 coordinates substrate. The interval 180–462 (ENQYLDMITK…HDKIEMKMAV (283 aa)) is thymidylate synthase. Residue arginine 200 participates in dUMP binding. Residue cysteine 345 is part of the active site. Residues histidine 346, 364-368 (QRSCD), asparagine 376, and 406-408 (HIY) contribute to the dUMP site.

The protein in the N-terminal section; belongs to the dihydrofolate reductase family. It in the C-terminal section; belongs to the thymidylate synthase family.

It carries out the reaction (6S)-5,6,7,8-tetrahydrofolate + NADP(+) = 7,8-dihydrofolate + NADPH + H(+). The enzyme catalyses dUMP + (6R)-5,10-methylene-5,6,7,8-tetrahydrofolate = 7,8-dihydrofolate + dTMP. The protein operates within cofactor biosynthesis; tetrahydrofolate biosynthesis; 5,6,7,8-tetrahydrofolate from 7,8-dihydrofolate: step 1/1. Bifunctional enzyme. Involved in de novo dTMP biosynthesis. Key enzyme in folate metabolism. Catalyzes an essential reaction for de novo glycine and purine synthesis, DNA precursor synthesis, and for the conversion of dUMP to dTMP. In Paramecium tetraurelia, this protein is Bifunctional dihydrofolate reductase-thymidylate synthase.